We begin with the raw amino-acid sequence, 371 residues long: tRNA (guanine(26)-N(2))-dimethyltransferase (371 aa).

In terms of domain architecture, Trm1 methyltransferase spans 4–368 (VEVTEGRTRF…APLPVLEKVV (365 aa)). S-adenosyl-L-methionine contacts are provided by Arg-41, Arg-66, Asp-82, Asp-108, and Ala-109. Residues Cys-237, Cys-240, Cys-256, and Cys-259 each contribute to the Zn(2+) site.

It belongs to the class I-like SAM-binding methyltransferase superfamily. Trm1 family.

The catalysed reaction is guanosine(26) in tRNA + 2 S-adenosyl-L-methionine = N(2)-dimethylguanosine(26) in tRNA + 2 S-adenosyl-L-homocysteine + 2 H(+). Its function is as follows. Dimethylates a single guanine residue at position 26 of a number of tRNAs using S-adenosyl-L-methionine as donor of the methyl groups. The chain is tRNA (guanine(26)-N(2))-dimethyltransferase from Methanoculleus marisnigri (strain ATCC 35101 / DSM 1498 / JR1).